The following is a 92-amino-acid chain: Putative regulatory protein Tpet_0986 (92 aa).

The protein belongs to the RemA family.

The chain is Putative regulatory protein Tpet_0986 from Thermotoga petrophila (strain ATCC BAA-488 / DSM 13995 / JCM 10881 / RKU-1).